The sequence spans 357 residues: Glutamine synthetase root isozyme A (357 aa).

A GS beta-grasp domain is found at 19–99; sequence IIAEYIWVGG…VICDVYTPAG (81 aa). Residues 106 to 357 form the GS catalytic domain; it reads KRYNAAKIFS…AETTILWKKP (252 aa).

Belongs to the glutamine synthetase family. Homooctamer.

The protein resides in the cytoplasm. It carries out the reaction L-glutamate + NH4(+) + ATP = L-glutamine + ADP + phosphate + H(+). This chain is Glutamine synthetase root isozyme A (GS3A), found in Pisum sativum (Garden pea).